An 83-amino-acid polypeptide reads, in one-letter code: Cytochrome b559 subunit alpha (83 aa).

A helical membrane pass occupies residues 21 to 35 (VIHSITIPSLFIAGW). Residue His23 participates in heme binding.

It belongs to the PsbE/PsbF family. In terms of assembly, heterodimer of an alpha subunit and a beta subunit. PSII is composed of 1 copy each of membrane proteins PsbA, PsbB, PsbC, PsbD, PsbE, PsbF, PsbH, PsbI, PsbJ, PsbK, PsbL, PsbM, PsbT, PsbX, PsbY, PsbZ, Psb30/Ycf12, at least 3 peripheral proteins of the oxygen-evolving complex and a large number of cofactors. It forms dimeric complexes. Requires heme b as cofactor.

Its subcellular location is the plastid. It localises to the chloroplast thylakoid membrane. In terms of biological role, this b-type cytochrome is tightly associated with the reaction center of photosystem II (PSII). PSII is a light-driven water:plastoquinone oxidoreductase that uses light energy to abstract electrons from H(2)O, generating O(2) and a proton gradient subsequently used for ATP formation. It consists of a core antenna complex that captures photons, and an electron transfer chain that converts photonic excitation into a charge separation. In Tupiella akineta (Green alga), this protein is Cytochrome b559 subunit alpha.